The primary structure comprises 92 residues: Acylphosphatase (92 aa).

In terms of domain architecture, Acylphosphatase-like spans 4-92 (AVQLDVFGRV…SACHKFSVVG (89 aa)). Catalysis depends on residues Arg19 and Asn37.

This sequence belongs to the acylphosphatase family.

The catalysed reaction is an acyl phosphate + H2O = a carboxylate + phosphate + H(+). The chain is Acylphosphatase (acyP) from Latilactobacillus sakei subsp. sakei (strain 23K) (Lactobacillus sakei subsp. sakei).